We begin with the raw amino-acid sequence, 548 residues long: MKEAELNRDMARYCTDNQCVSLQPQGLGPKSAALMAPRTLRHVQVILALMVVTVIFSLLALFVVASQPWRPEWNKEPPSLLLRGSNNSGHDNHSQFVRETEMQVAIQRLRDYEENSSSCHKEVQILKYQMDNVSSLVQLLGSHLEDVNADILQTKDVLKESGALALETQALRSSLEVASADIHSLRGDLEKANAMTSQTRGLLKSSTENTSAELHVLGRGLEEAQSEIQALRGSLQSANDLSSQTQGFLQHSMDNISAQIQTVRDGMERAGEKMNSLKKELETLTAQTQKANGHLEQTDAQIQGLKAELKSTSSLNSRIEVVNGQMKDASRELQTLRRDLSDVSALKSNVQMLQSNLQRAKTEMQTLKADLQATKALTAKIQGEQNRLGALQEAVAAQKQEQKTQNQVLQLIAQNWKYFNGNFYYFSRDKKPWREAEKFCTSQGAHLASVTSQEEQAFLVQTTSSGDHWIGLTDQGTEGIWRWVDGTPFNNAQSKGFWGKNQPDNWRHRNGEREDCVHVRQQWNDMACGSSYPWVCKKSTGWSAARVG.

The Cytoplasmic segment spans residues 1–42 (MKEAELNRDMARYCTDNQCVSLQPQGLGPKSAALMAPRTLRH). A helical; Signal-anchor for type II membrane protein transmembrane segment spans residues 43-69 (VQVILALMVVTVIFSLLALFVVASQPW). The Extracellular portion of the chain corresponds to 70–548 (RPEWNKEPPS…STGWSAARVG (479 aa)). Residues asparagine 86, asparagine 92, asparagine 115, asparagine 132, asparagine 209, and asparagine 255 are each glycosylated (N-linked (GlcNAc...) asparagine). A C-type lectin domain is found at 438-538 (KFCTSQGAHL…GSSYPWVCKK (101 aa)). Disulfide bonds link cysteine 440–cysteine 536 and cysteine 516–cysteine 528.

In terms of tissue distribution, kupffer cells.

Its subcellular location is the membrane. Receptor with an affinity for galactose and fucose. Could be involved in endocytosis. The protein is C-type lectin domain family 4 member F (Clec4f) of Mus musculus (Mouse).